Consider the following 639-residue polypeptide: Threonine--tRNA ligase (639 aa).

Residues 1–61 form the TGS domain; sequence MIHITLPDGS…TQDSPLSIVT (61 aa). The catalytic stretch occupies residues 242-533; it reads DHRKLGRELD…LIEEHAGALP (292 aa). 3 residues coordinate Zn(2+): cysteine 333, histidine 384, and histidine 510.

This sequence belongs to the class-II aminoacyl-tRNA synthetase family. In terms of assembly, homodimer. It depends on Zn(2+) as a cofactor.

It is found in the cytoplasm. It carries out the reaction tRNA(Thr) + L-threonine + ATP = L-threonyl-tRNA(Thr) + AMP + diphosphate + H(+). Catalyzes the attachment of threonine to tRNA(Thr) in a two-step reaction: L-threonine is first activated by ATP to form Thr-AMP and then transferred to the acceptor end of tRNA(Thr). Also edits incorrectly charged L-seryl-tRNA(Thr). The protein is Threonine--tRNA ligase of Acidovorax sp. (strain JS42).